Reading from the N-terminus, the 338-residue chain is Tagatose 1,6-diphosphate aldolase (338 aa).

The protein belongs to the aldolase LacD family.

The enzyme catalyses D-tagatofuranose 1,6-bisphosphate = D-glyceraldehyde 3-phosphate + dihydroxyacetone phosphate. Its pathway is carbohydrate metabolism; D-tagatose 6-phosphate degradation; D-glyceraldehyde 3-phosphate and glycerone phosphate from D-tagatose 6-phosphate: step 2/2. The chain is Tagatose 1,6-diphosphate aldolase from Listeria monocytogenes serotype 4a (strain HCC23).